Here is a 976-residue protein sequence, read N- to C-terminus: LRR receptor-like serine/threonine-protein kinase ERECTA (976 aa).

The signal sequence occupies residues 1–24 (MALFRDIVLLGFLFCLSLVATVTS). Residues 25–580 (EEGATLLEIK…RRTVRVSISR (556 aa)) lie on the Extracellular side of the membrane. 2 N-linked (GlcNAc...) asparagine glycosylation sites follow: N65 and N74. 20 LRR repeats span residues 69 to 92 (NVVA…GDLK), 93 to 115 (SLLS…IGDC), 117 to 140 (SLQN…SKLK), 141 to 163 (QLEQ…LSQI), 165 to 187 (NLKI…IYWN), 189 to 212 (VLQY…CQLT), 213 to 235 (GLWY…IGNC), 237 to 259 (AFQV…IGFL), 260 to 282 (QVAT…IGLM), 284 to 306 (ALAV…LGNL), 308 to 330 (FTEK…LGNM), 332 to 355 (KLHY…GKLT), 356 to 379 (DLFD…SSCT), 380 to 401 (NLNS…AFQK), 404 to 425 (SMTY…ELSR), 428 to 449 (NLDT…SLGD), 452 to 473 (HLLK…DFGN), 476 to 498 (SIME…LNQL), 500 to 522 (NIIL…ANCL), and 523 to 545 (SLTV…NNFS). N-linked (GlcNAc...) asparagine glycans are attached at residues N221 and N234. N-linked (GlcNAc...) asparagine glycans are attached at residues N305 and N329. N-linked (GlcNAc...) asparagine glycosylation is present at N409. Residue N457 is glycosylated (N-linked (GlcNAc...) asparagine). N-linked (GlcNAc...) asparagine glycosylation is found at N510, N528, and N543. Residues 581–601 (AAILGIAIGGLVILLMVLIAA) traverse the membrane as a helical segment. At 602-976 (CRPHNPPPFL…FGQVISQNSE (375 aa)) the chain is on the cytoplasmic side. A Phosphothreonine modification is found at T645. In terms of domain architecture, Protein kinase spans 648–918 (LSEKYIIGHG…QVTRVLGSFM (271 aa)). Residues 654 to 662 (IGHGASSTV) and K676 each bind ATP. A phosphotyrosine mark is found at Y721 and Y760. D773 functions as the Proton acceptor in the catalytic mechanism. At Y815 the chain carries Phosphotyrosine. T823 carries the phosphothreonine modification.

Belongs to the protein kinase superfamily. Ser/Thr protein kinase family. Homodimer and heterodimer with ERL1 and TMM. Interacts with EPF1, EPF2, EPFL4, EPFL5 and EPFL6. Interacts with SERK1, SERK2, SERK3/BAK1 and SERK4 in a EPF2-induced manner. Interacts with EPFL9/STOMAGEN. Mostly expressed in shoot apical meristems (SAM), organ primordia, flowers, siliques and young rosette leaves, and, to a lower extent, in stems and cauline leaves. Expressed in growing inflorescence stems and pedicels. Detected in epidermis, phloem and xylem.

The protein resides in the cell membrane. The enzyme catalyses L-seryl-[protein] + ATP = O-phospho-L-seryl-[protein] + ADP + H(+). The catalysed reaction is L-threonyl-[protein] + ATP = O-phospho-L-threonyl-[protein] + ADP + H(+). Its function is as follows. Receptor kinase that, together with ERL1 and ERL2, regulates aerial architecture, including inflorescence (e.g. shoot apical meristem-originating organ shape, elongation of the internode and pedicels, and adaxial-abaxial polarity), and stomatal patterning (e.g. density and clustering), probably by tuning cell division and expansion. Redundantly involved with ERL1 in procambial development regulation. Forms a functional ligand-receptor pair with EPF2 (AC Q8LC53). Modulates plant transpiration efficiency by controlling stomatal density, leaf photosynthetic capacity, epidermal cell expansion, mesophyll cell proliferation and cell-cell contact. A phloem-specific expression of ER is sufficient for proper inflorescence architecture. Probable major trait regulating canalization (maintenance of phenotype despite varying environment) in many aspect of the plant physiology (e.g. plant morphology, light-dependent leaves number, branch number, flowering time, phytate and mineral concentrations) by transducing microenvironmental variation into phenotypic differentiation (ecological amplifier). May maintain development integrity in heat stress conditions. Regulates cell wall composition and structure. Confers resistance to the pathogenic bacteria Ralstonia solanacearum and to the necrotrophic fungi Plectosphaerella cucumerina and Pythium irregulare, and required for callose deposition upon infection. Resistance to P.cucumerina seems cell wall-mediated. Forms a constitutive complex with TMM involved in the recognition of the stomatal regulatory peptides EPF1, EPF2 and EPFL9/STOMAGEN. The protein is LRR receptor-like serine/threonine-protein kinase ERECTA of Arabidopsis thaliana (Mouse-ear cress).